The sequence spans 244 residues: NAD(P)H-quinone oxidoreductase subunit K (244 aa).

Positions 60, 61, 125, and 156 each coordinate [4Fe-4S] cluster.

Belongs to the complex I 20 kDa subunit family. In terms of assembly, NDH-1 can be composed of about 15 different subunits; different subcomplexes with different compositions have been identified which probably have different functions. It depends on [4Fe-4S] cluster as a cofactor.

The protein resides in the cellular thylakoid membrane. It catalyses the reaction a plastoquinone + NADH + (n+1) H(+)(in) = a plastoquinol + NAD(+) + n H(+)(out). It carries out the reaction a plastoquinone + NADPH + (n+1) H(+)(in) = a plastoquinol + NADP(+) + n H(+)(out). Functionally, NDH-1 shuttles electrons from an unknown electron donor, via FMN and iron-sulfur (Fe-S) centers, to quinones in the respiratory and/or the photosynthetic chain. The immediate electron acceptor for the enzyme in this species is believed to be plastoquinone. Couples the redox reaction to proton translocation, and thus conserves the redox energy in a proton gradient. Cyanobacterial NDH-1 also plays a role in inorganic carbon-concentration. The polypeptide is NAD(P)H-quinone oxidoreductase subunit K (Prochlorococcus marinus (strain MIT 9515)).